The chain runs to 686 residues: MQEYHIHNLDCPDCASKLERDLNELDYVKKAQINFSTSKLFLDTSDFEKVKAFIKQNEPHLSLSFKEATEKPLSFTPLIITIMVFLGAILILHLNPSPLIEKAMFFVLALVYLVSGKDVILGAFRGLRKGQFFDENALMLIATIAAFFVGAYEESVSIMVFYSAGEFLQKLAVSRSKKSLKALVDVAPNLAYLKKGDELVSVAPEDLRVNDIVVVKVGEKVPVDGVVVKGESLLDERALSGESMPVNVSENSKVLGGSLNLKAVLEIQVEKMYKDSSIAKVVDLVQQATNEKSETEKFITKFSRYYTPSVLFIALMIAVLPPLFSMGSFDEWIYRGLVALMVSCPCALVISVPLGYFGGVGAASRKGILMKGVHVLEVLTQAKSIAFDKTGTLTKGVFKVTDIVPQNGHSKEEVLHYASCSQLLSTHPIALSIQKACEEMLKDDKHQHDIKNYEEVSGMGVKAQCHTDLIIAGNEKMLDQFHIAHSPSKENGTIVHVAFNQTYVGYIVISDEIKDDAIECLRDLKVQGIENFCILSGDRKSATESIAQTLGCEYHASLLPEEKTSVFKTFKERYKAPAIFVGDGINDAPTLASADVGIGMGKGSELSKQSADIVITNDSLNSLVKVLAIAKKTKSIIWQNILFALGIKAVFIVLGLMGVASLWEAVFGDVGVTLLALANSMRAMRA.

One can recognise an HMA domain in the interval 1 to 62 (MQEYHIHNLD…FIKQNEPHLS (62 aa)). Topologically, residues 1–72 (MQEYHIHNLD…LSFKEATEKP (72 aa)) are cytoplasmic. Residues C11 and C14 each coordinate Cd(2+). Residues C11 and C14 each coordinate Co(2+). Residues C11 and C14 each coordinate Zn(2+). Residues 73-92 (LSFTPLIITIMVFLGAILIL) traverse the membrane as a helical segment. Over 93-102 (HLNPSPLIEK) the chain is Extracellular. The helical transmembrane segment at 103–124 (AMFFVLALVYLVSGKDVILGAF) threads the bilayer. The Cytoplasmic portion of the chain corresponds to 125 to 131 (RGLRKGQ). The chain crosses the membrane as a helical span at residues 132 to 151 (FFDENALMLIATIAAFFVGA). Topologically, residues 152–154 (YEE) are extracellular. The chain crosses the membrane as a helical span at residues 155–174 (SVSIMVFYSAGEFLQKLAVS). At 175–308 (RSKKSLKALV…ITKFSRYYTP (134 aa)) the chain is on the cytoplasmic side. The chain crosses the membrane as a helical span at residues 309–327 (SVLFIALMIAVLPPLFSMG). Residues 328–332 (SFDEW) are Extracellular-facing. Residues 333-350 (IYRGLVALMVSCPCALVI) traverse the membrane as a helical segment. The Cytoplasmic portion of the chain corresponds to 351 to 635 (SVPLGYFGGV…VLAIAKKTKS (285 aa)). The 4-aspartylphosphate intermediate role is filled by D388. Positions 583 and 587 each coordinate Mg(2+). Residues 636 to 657 (IIWQNILFALGIKAVFIVLGLM) form a helical membrane-spanning segment. Residues 658–665 (GVASLWEA) lie on the Extracellular side of the membrane. The helical transmembrane segment at 666–681 (VFGDVGVTLLALANSM) threads the bilayer. Residues 682-686 (RAMRA) are Cytoplasmic-facing.

The protein belongs to the cation transport ATPase (P-type) (TC 3.A.3) family. Type IB subfamily.

It is found in the cell membrane. The catalysed reaction is Zn(2+)(in) + ATP + H2O = Zn(2+)(out) + ADP + phosphate + H(+). It catalyses the reaction Cd(2+)(in) + ATP + H2O = Cd(2+)(out) + ADP + phosphate + H(+). Its function is as follows. Couples the hydrolysis of ATP with the transport of cadmium, zinc and cobalt out of the cell. This ion efflux may influence the activity of urease, which is essential for the survival of the bacterium in the gastric environment. The chain is Cadmium, zinc and cobalt-transporting ATPase (cadA) from Helicobacter pylori (strain ATCC 700392 / 26695) (Campylobacter pylori).